Consider the following 384-residue polypeptide: Transcription factor 7 (384 aa).

The segment covering 1-16 (MPQLDSGGGGAGGGDD) has biased composition (gly residues). Residues 1-59 (MPQLDSGGGGAGGGDDLGAPDELLAFQDEGEEQDDKSRDSAAGPERDLAELKSSLVNES) are CTNNB1-binding. Disordered regions lie at residues 1–88 (MPQL…LGRE), 133–183 (PPSG…QKQV), and 337–384 (SARD…MTVL). The span at 35-50 (DKSRDSAAGPERDLAE) shows a compositional bias: basic and acidic residues. Over residues 62–78 (AAGGAGIPGVPGAGAGA) the composition is skewed to gly residues. The HMG box DNA-binding region spans 269–337 (IKKPLNAFML…LHMQLYPGWS (69 aa)). The Nuclear localization signal motif lies at 344 to 348 (KKKRR). Positions 352 to 370 (KHQESTTGGKRNAFGTYPE) are enriched in basic and acidic residues. A compositionally biased stretch (low complexity) spans 374–384 (APAPFLPMTVL).

The protein belongs to the TCF/LEF family. In terms of assembly, binds the armadillo repeat of CTNNB1 and forms a stable complex. Interacts with TLE5, TLE1, TLE2, TLE3 and TLE4. Interacts with MLLT11. Long isoform interacts (via N-terminus) with SOX13; inhibits WNT-mediated transcriptional activity. Interacts with DAZAP2. In terms of tissue distribution, predominantly expressed in T-cells. Also detected in proliferating intestinal epithelial cells and in the basal epithelial cells of mammary gland epithelium.

The protein localises to the nucleus. Its function is as follows. Transcriptional activator involved in T-cell lymphocyte differentiation. Necessary for the survival of CD4(+) CD8(+) immature thymocytes. Isoforms lacking the N-terminal CTNNB1 binding domain cannot fulfill this role. Binds to the T-lymphocyte-specific enhancer element (5'-WWCAAAG-3') found in the promoter of the CD3E gene. Represses expression of the T-cell receptor gamma gene in alpha-beta T-cell lineages. Required for the development of natural killer receptor-positive lymphoid tissue inducer T-cells. TLE1, TLE2, TLE3 and TLE4 repress transactivation mediated by TCF7 and CTNNB1. May also act as feedback transcriptional repressor of CTNNB1 and TCF7L2 target genes. The polypeptide is Transcription factor 7 (Homo sapiens (Human)).